The following is a 115-amino-acid chain: Large ribosomal subunit protein bL19 (115 aa).

This sequence belongs to the bacterial ribosomal protein bL19 family.

Functionally, this protein is located at the 30S-50S ribosomal subunit interface and may play a role in the structure and function of the aminoacyl-tRNA binding site. In Desulfovibrio desulfuricans (strain ATCC 27774 / DSM 6949 / MB), this protein is Large ribosomal subunit protein bL19.